A 540-amino-acid chain; its full sequence is Glucose-6-phosphate isomerase (540 aa).

Glu-346 acts as the Proton donor in catalysis. Active-site residues include His-377 and Lys-505.

The protein belongs to the GPI family.

It is found in the cytoplasm. The enzyme catalyses alpha-D-glucose 6-phosphate = beta-D-fructose 6-phosphate. The protein operates within carbohydrate biosynthesis; gluconeogenesis. Its pathway is carbohydrate degradation; glycolysis; D-glyceraldehyde 3-phosphate and glycerone phosphate from D-glucose: step 2/4. Catalyzes the reversible isomerization of glucose-6-phosphate to fructose-6-phosphate. The sequence is that of Glucose-6-phosphate isomerase from Francisella tularensis subsp. tularensis (strain WY96-3418).